The following is a 421-amino-acid chain: Thymidine phosphorylase (421 aa).

The protein belongs to the thymidine/pyrimidine-nucleoside phosphorylase family. In terms of assembly, homodimer.

The catalysed reaction is thymidine + phosphate = 2-deoxy-alpha-D-ribose 1-phosphate + thymine. In terms of biological role, the enzymes which catalyze the reversible phosphorolysis of pyrimidine nucleosides are involved in the degradation of these compounds and in their utilization as carbon and energy sources, or in the rescue of pyrimidine bases for nucleotide synthesis. The protein is Thymidine phosphorylase (deoA) of Mycoplasma genitalium (strain ATCC 33530 / DSM 19775 / NCTC 10195 / G37) (Mycoplasmoides genitalium).